The chain runs to 837 residues: Neural cell adhesion molecule 2 (837 aa).

A signal peptide spans 1-19 (MSLLLSFYLLGLLVSSGQA). At 20–697 (LLQVTISLSK…PNIIKDTLFN (678 aa)) the chain is on the extracellular side. 5 consecutive Ig-like C2-type domains span residues 21-108 (LQVT…ATVV), 113-202 (QKLT…RDII), 208-297 (PPAI…AFLQ), 302-396 (PHII…MYLD), and 401-491 (PKFI…YILA). 2 disulfide bridges follow: C42-C93 and C136-C186. N-linked (GlcNAc...) asparagine glycosylation is found at N177 and N219. Residues C232 and C281 are joined by a disulfide bond. N-linked (GlcNAc...) asparagine glycosylation is present at N309. A disulfide bridge links C322 with C380. N406, N419, N445, N474, and N562 each carry an N-linked (GlcNAc...) asparagine glycan. A disulfide bridge links C422 with C475. 2 Fibronectin type-III domains span residues 498–591 (SPYG…TLPV) and 593–688 (EPSP…PPKP). The chain crosses the membrane as a helical span at residues 698–718 (GLGLGAVIGLGVAALLLILVV). The Cytoplasmic portion of the chain corresponds to 719–837 (TDVSCFFIRQ…IQSKEDDSKA (119 aa)). The segment covering 764-785 (GSKEPIVEMRTEDERVTNHEDG) has biased composition (basic and acidic residues). A disordered region spans residues 764–818 (GSKEPIVEMRTEDERVTNHEDGSPVNEPNETTPLTEPEKLPLKEEDGKEALNPET). S765 bears the Phosphoserine mark. Residue T780 is modified to Phosphothreonine. Residue S786 is modified to Phosphoserine. Positions 789 to 798 (NEPNETTPLT) are enriched in low complexity. Residues 799-814 (EPEKLPLKEEDGKEAL) are compositionally biased toward basic and acidic residues.

Expressed most strongly in adult and fetal brain.

Its subcellular location is the cell membrane. Its function is as follows. May play important roles in selective fasciculation and zone-to-zone projection of the primary olfactory axons. The chain is Neural cell adhesion molecule 2 (NCAM2) from Homo sapiens (Human).